Reading from the N-terminus, the 379-residue chain is Succinyl-diaminopimelate desuccinylase (379 aa).

Histidine 68 contributes to the Zn(2+) binding site. Residue aspartate 70 is part of the active site. Aspartate 101 serves as a coordination point for Zn(2+). The active-site Proton acceptor is the glutamate 135. Zn(2+) is bound by residues glutamate 136, glutamate 164, and histidine 350.

Belongs to the peptidase M20A family. DapE subfamily. Homodimer. Zn(2+) serves as cofactor. Requires Co(2+) as cofactor.

It catalyses the reaction N-succinyl-(2S,6S)-2,6-diaminopimelate + H2O = (2S,6S)-2,6-diaminopimelate + succinate. It functions in the pathway amino-acid biosynthesis; L-lysine biosynthesis via DAP pathway; LL-2,6-diaminopimelate from (S)-tetrahydrodipicolinate (succinylase route): step 3/3. Functionally, catalyzes the hydrolysis of N-succinyl-L,L-diaminopimelic acid (SDAP), forming succinate and LL-2,6-diaminopimelate (DAP), an intermediate involved in the bacterial biosynthesis of lysine and meso-diaminopimelic acid, an essential component of bacterial cell walls. This Bordetella pertussis (strain Tohama I / ATCC BAA-589 / NCTC 13251) protein is Succinyl-diaminopimelate desuccinylase.